Reading from the N-terminus, the 216-residue chain is Putative holocytochrome-c1 synthase (216 aa).

The segment at 1–46 (MQPEQLNQEEESKCPVPPEVRDAWLKSHGGKKPSEVHDTPHPTMLP) is disordered.

It belongs to the cytochrome c-type heme lyase family.

Its subcellular location is the mitochondrion inner membrane. The enzyme catalyses holo-[cytochrome c] = apo-[cytochrome c] + heme b. Its function is as follows. Lyase that catalyzes the covalent linking of the heme group to the cytochrome C1 apoprotein to produce the mature functional cytochrome. In Schizosaccharomyces pombe (strain 972 / ATCC 24843) (Fission yeast), this protein is Putative holocytochrome-c1 synthase.